Consider the following 614-residue polypeptide: MRPPWYPLHTPSLAFPLLFLLLSLLGGGARAEGREDPQLLVRVRGGQLRGIRLKAPGGPVSAFLGIPFAEPPVGSRRFMPPEPKRPWSGVLDATTFQNVCYQYVDTLYPGFEGTEMWNPNRELSEDCLYLNVWTPYPRPASPTPVLIWIYGGGFYSGAASLDVYDGRFLAQVEGAVLVSMNYRVGTFGFLALPGSREAPGNVGLLDQRLALQWVQENIAAFGGDPMSVTLFGESAGAASVGMHILSLPSRSLFHRAVLQSGTPNGPWATVSAGEARRRATLLARLVGCPPGGAGGNDTELIACLRTRPAQDLVDHEWHVLPQESIFRFSFVPVVDGDFLSDTPEALINTGDFQDLQVLVGVVKDEGSYFLVYGVPGFSKDNESLISRAQFLAGVRIGVPQASDLAAEAVVLHYTDWLHPEDPTHLRDAMSAVVGDHNVVCPVAQLAGRLAAQGARVYAYIFEHRASTLTWPLWMGVPHGYEIEFIFGLPLDPSLNYTTEERIFAQRLMKYWTNFARTGDPNDPRDSKSPQWPPYTTAAQQYVSLNLKPLEVRRGLRAQTCAFWNRFLPKLLSATDTLDEAERQWKAEFHRWSSYMVHWKNQFDHYSKQERCSDL.

Positions 1–31 are cleaved as a signal peptide; it reads MRPPWYPLHTPSLAFPLLFLLLSLLGGGARA. A disulfide bond links cysteine 100 and cysteine 127. Residue serine 234 is the Acyl-ester intermediate of the active site. A disulfide bridge connects residues cysteine 288 and cysteine 303. N-linked (GlcNAc...) asparagine glycosylation is present at asparagine 296. Glutamate 365 functions as the Charge relay system in the catalytic mechanism. Residue asparagine 381 is glycosylated (N-linked (GlcNAc...) asparagine). Cysteines 440 and 560 form a disulfide. Histidine 478 acts as the Charge relay system in catalysis. Residue asparagine 495 is glycosylated (N-linked (GlcNAc...) asparagine).

The protein belongs to the type-B carboxylesterase/lipase family. In terms of assembly, isoform H generates GPI-anchored dimers; disulfide linked. Isoform T generates multiple structures, ranging from monomers and dimers to collagen-tailed and hydrophobic-tailed forms, in which catalytic tetramers are associated with anchoring proteins that attach them to the basal lamina or to cell membranes. In the collagen-tailed forms, isoform T subunits are associated with a specific collagen, COLQ, which triggers the formation of isoform T tetramers, from monomers and dimers. Interacts with PRIMA1. The interaction with PRIMA1 is required to anchor it to the basal lamina of cells and organize into tetramers. In terms of tissue distribution, predominates in most expressing tissues except erythrocytes where a glycophospholipid-attached form of ACHE predominates.

It is found in the synapse. The protein localises to the secreted. Its subcellular location is the cell membrane. The enzyme catalyses acetylcholine + H2O = choline + acetate + H(+). In terms of biological role, terminates signal transduction at the neuromuscular junction by rapid hydrolysis of the acetylcholine released into the synaptic cleft. The polypeptide is Acetylcholinesterase (Ache) (Mus musculus (Mouse)).